An 89-amino-acid chain; its full sequence is Conotoxin Bu5 (89 aa).

Residues 1–22 (MKLTCVLIVAVLFLTACQLATA) form the signal peptide. Positions 23–49 (ENSREEQGYSAVRSSDQIQDSDLKLTK) are excised as a propeptide. 3 disulfide bridges follow: cysteine 51/cysteine 66, cysteine 58/cysteine 70, and cysteine 65/cysteine 79. Residue cysteine 79 is modified to Cysteine amide. A propeptide spanning residues 80-89 (GVSIDYYDSR) is cleaved from the precursor.

Belongs to the conotoxin O1 superfamily. Expressed by the venom duct.

It is found in the secreted. This chain is Conotoxin Bu5, found in Conus bullatus (Bubble cone).